Consider the following 181-residue polypeptide: MAILLHFGVLITAFLSSHVEGKRDPILYCGACRALVDELLYEIRKVNPKKTVDVGSFRISPDGKQEQNKVPFAKSELYLTDVLEEICEKMNDYGLYVDPTTQEKSYKRFAPRDNEGIGSVDFKNFQFNPEESNSLKYACERVVEEHEDEVLSVITKENDNLADKLCTEETGLCKEYLHNEL.

Residues M1–G21 form the signal peptide. A Saposin B-type domain is found at P25–L177. 3 cysteine pairs are disulfide-bonded: C29-C173, C32-C166, and C87-C139. Positions H178–L181 match the Prevents secretion from ER motif.

This sequence belongs to the canopy family.

It localises to the endoplasmic reticulum. Functionally, plays an role in early embryonic development. In Xenopus laevis (African clawed frog), this protein is Protein canopy homolog 1 (cnpy1).